Reading from the N-terminus, the 426-residue chain is 5-hydroxybenzimidazole synthase BzaB (426 aa).

Residues methionine 95, tyrosine 124, histidine 163, serine 185–glycine 187, aspartate 226–arginine 229, and glutamate 265 each bind substrate. Residue histidine 269 participates in Zn(2+) binding. Residue phenylalanine 292 coordinates substrate. Histidine 333 lines the Zn(2+) pocket. [4Fe-4S] cluster contacts are provided by cysteine 407, cysteine 410, and cysteine 414.

The protein belongs to the ThiC family. 5-hydroxybenzimidazole synthase subfamily. [4Fe-4S] cluster serves as cofactor.

It catalyses the reaction 5-amino-1-(5-phospho-beta-D-ribosyl)imidazole + AH2 + S-adenosyl-L-methionine = 5-hydroxybenzimidazole + 5'-deoxyadenosine + formate + L-methionine + A + NH4(+) + phosphate + 2 H(+). Functionally, together with BzaA, probably catalyzes the conversion of aminoimidazole ribotide (AIR) to 5-hydroxybenzimidazole (5-HBI) in a radical S-adenosyl-L-methionine (SAM)-dependent reaction. Is thus involved in the anaerobic biosynthesis of the benzimidazole lower axial ligand of the cobamide produced by M.thermoacetica. Requires BzaA for catalytic activity, as BzaB alone displays no activity. This is 5-hydroxybenzimidazole synthase BzaB from Moorella thermoacetica (strain ATCC 39073 / JCM 9320).